Here is a 156-residue protein sequence, read N- to C-terminus: Methylated-DNA--protein-cysteine methyltransferase (156 aa).

The active-site Nucleophile; methyl group acceptor is cysteine 120.

This sequence belongs to the MGMT family.

It localises to the cytoplasm. It carries out the reaction a 6-O-methyl-2'-deoxyguanosine in DNA + L-cysteinyl-[protein] = S-methyl-L-cysteinyl-[protein] + a 2'-deoxyguanosine in DNA. The enzyme catalyses a 4-O-methyl-thymidine in DNA + L-cysteinyl-[protein] = a thymidine in DNA + S-methyl-L-cysteinyl-[protein]. Involved in the cellular defense against the biological effects of O6-methylguanine (O6-MeG) and O4-methylthymine (O4-MeT) in DNA. Repairs the methylated nucleobase in DNA by stoichiometrically transferring the methyl group to a cysteine residue in the enzyme. This is a suicide reaction: the enzyme is irreversibly inactivated. The chain is Methylated-DNA--protein-cysteine methyltransferase from Metallosphaera sedula (strain ATCC 51363 / DSM 5348 / JCM 9185 / NBRC 15509 / TH2).